A 153-amino-acid polypeptide reads, in one-letter code: Probable Brix domain-containing ribosomal biogenesis protein (153 aa).

The region spanning 1–153 (MQVLTTSRKP…RILKISRSSR (153 aa)) is the Brix domain.

Probably involved in the biogenesis of the ribosome. In Archaeoglobus fulgidus (strain ATCC 49558 / DSM 4304 / JCM 9628 / NBRC 100126 / VC-16), this protein is Probable Brix domain-containing ribosomal biogenesis protein.